The sequence spans 129 residues: Large ribosomal subunit protein uL22 (129 aa).

Belongs to the universal ribosomal protein uL22 family. As to quaternary structure, part of the 50S ribosomal subunit.

Its function is as follows. This protein binds specifically to 23S rRNA; its binding is stimulated by other ribosomal proteins, e.g. L4, L17, and L20. It is important during the early stages of 50S assembly. It makes multiple contacts with different domains of the 23S rRNA in the assembled 50S subunit and ribosome. Functionally, the globular domain of the protein is located near the polypeptide exit tunnel on the outside of the subunit, while an extended beta-hairpin is found that lines the wall of the exit tunnel in the center of the 70S ribosome. The protein is Large ribosomal subunit protein uL22 of Sinorhizobium medicae (strain WSM419) (Ensifer medicae).